The primary structure comprises 150 residues: Holo-[acyl-carrier-protein] synthase (150 aa).

Asp-8 and Glu-57 together coordinate Mg(2+).

This sequence belongs to the P-Pant transferase superfamily. AcpS family. Requires Mg(2+) as cofactor.

The protein resides in the cytoplasm. The enzyme catalyses apo-[ACP] + CoA = holo-[ACP] + adenosine 3',5'-bisphosphate + H(+). In terms of biological role, transfers the 4'-phosphopantetheine moiety from coenzyme A to a Ser of acyl-carrier-protein. In Jannaschia sp. (strain CCS1), this protein is Holo-[acyl-carrier-protein] synthase.